Here is a 441-residue protein sequence, read N- to C-terminus: 3-phosphoshikimate 1-carboxyvinyltransferase (441 aa).

Residues Lys-26, Ser-27, and Arg-31 each contribute to the 3-phosphoshikimate site. Lys-26 is a phosphoenolpyruvate binding site. Phosphoenolpyruvate-binding residues include Gly-99 and Arg-127. Residues Ser-173, Ser-174, Gln-175, Ser-203, Asp-320, and Lys-347 each coordinate 3-phosphoshikimate. A phosphoenolpyruvate-binding site is contributed by Gln-175. Asp-320 (proton acceptor) is an active-site residue. The phosphoenolpyruvate site is built by Arg-351, Arg-393, and Lys-423.

The protein belongs to the EPSP synthase family. As to quaternary structure, monomer.

The protein localises to the cytoplasm. The catalysed reaction is 3-phosphoshikimate + phosphoenolpyruvate = 5-O-(1-carboxyvinyl)-3-phosphoshikimate + phosphate. It participates in metabolic intermediate biosynthesis; chorismate biosynthesis; chorismate from D-erythrose 4-phosphate and phosphoenolpyruvate: step 6/7. Catalyzes the transfer of the enolpyruvyl moiety of phosphoenolpyruvate (PEP) to the 5-hydroxyl of shikimate-3-phosphate (S3P) to produce enolpyruvyl shikimate-3-phosphate and inorganic phosphate. This Janthinobacterium sp. (strain Marseille) (Minibacterium massiliensis) protein is 3-phosphoshikimate 1-carboxyvinyltransferase.